The sequence spans 191 residues: Large ribosomal subunit protein uL5 (191 aa).

The protein belongs to the universal ribosomal protein uL5 family. As to quaternary structure, part of the 50S ribosomal subunit; part of the 5S rRNA/L5/L18/L25 subcomplex. Contacts the 5S rRNA and the P site tRNA. Forms a bridge to the 30S subunit in the 70S ribosome.

In terms of biological role, this is one of the proteins that bind and probably mediate the attachment of the 5S RNA into the large ribosomal subunit, where it forms part of the central protuberance. In the 70S ribosome it contacts protein S13 of the 30S subunit (bridge B1b), connecting the 2 subunits; this bridge is implicated in subunit movement. Contacts the P site tRNA; the 5S rRNA and some of its associated proteins might help stabilize positioning of ribosome-bound tRNAs. The polypeptide is Large ribosomal subunit protein uL5 (Salinibacter ruber (strain DSM 13855 / M31)).